The primary structure comprises 139 residues: Low molecular weight protein-tyrosine-phosphatase PtpB (139 aa).

Cysteine 7 functions as the Nucleophile in the catalytic mechanism. Residue arginine 13 is part of the active site. Aspartate 111 acts as the Proton donor in catalysis.

It belongs to the low molecular weight phosphotyrosine protein phosphatase family.

The catalysed reaction is O-phospho-L-tyrosyl-[protein] + H2O = L-tyrosyl-[protein] + phosphate. Its activity is regulated as follows. Inhibited by N-ethylmaleimide and sodium orthovanadate. In terms of biological role, dephosphorylates the phosphotyrosine-containing proteins. The sequence is that of Low molecular weight protein-tyrosine-phosphatase PtpB (ptpB) from Staphylococcus aureus.